A 373-amino-acid chain; its full sequence is 3 beta-hydroxysteroid dehydrogenase/Delta 5--&gt;4-isomerase type 2 (373 aa).

Tyr155 acts as the Proton acceptor in catalysis. Lys159 is an NAD(+) binding site. Residues 288-308 (VPLLYWLAFLLETVSFLLSPI) form a helical membrane-spanning segment.

The protein belongs to the 3-beta-HSD family. Liver and kidney.

It is found in the endoplasmic reticulum membrane. Its subcellular location is the mitochondrion membrane. The enzyme catalyses a 3beta-hydroxy-Delta(5)-steroid + NAD(+) = a 3-oxo-Delta(5)-steroid + NADH + H(+). The catalysed reaction is a 3-oxo-Delta(5)-steroid = a 3-oxo-Delta(4)-steroid. It catalyses the reaction pregnenolone + NAD(+) = pregn-5-ene-3,20-dione + NADH + H(+). It carries out the reaction pregn-5-ene-3,20-dione = progesterone. The enzyme catalyses 3beta-hydroxyandrost-5-en-17-one + NAD(+) = androst-5-ene-3,17-dione + NADH + H(+). The catalysed reaction is androst-5-ene-3,17-dione = androst-4-ene-3,17-dione. It functions in the pathway lipid metabolism; steroid biosynthesis. In terms of biological role, 3-beta-HSD is a bifunctional enzyme, that catalyzes the oxidative conversion of Delta(5)-ene-3-beta-hydroxy steroid, and the oxidative conversion of ketosteroids. The 3-beta-HSD enzymatic system plays a crucial role in the biosynthesis of all classes of hormonal steroids. In Mus musculus (Mouse), this protein is 3 beta-hydroxysteroid dehydrogenase/Delta 5--&gt;4-isomerase type 2.